We begin with the raw amino-acid sequence, 427 residues long: Flotillin-1 (427 aa).

3 positions are modified to phosphoserine: Ser-19, Ser-163, and Ser-385. The residue at position 387 (Thr-387) is a Phosphothreonine.

The protein belongs to the band 7/mec-2 family. Flotillin subfamily. As to quaternary structure, heterooligomeric complex of flotillin-1 and flotillin-2 and caveolin-1 and caveolin-2. Interacts with ECPAS.

The protein resides in the cell membrane. Its subcellular location is the endosome. It is found in the membrane. The protein localises to the caveola. It localises to the melanosome. The protein resides in the membrane raft. Functionally, may act as a scaffolding protein within caveolar membranes, functionally participating in formation of caveolae or caveolae-like vesicles. The polypeptide is Flotillin-1 (FLOT1) (Sus scrofa (Pig)).